We begin with the raw amino-acid sequence, 230 residues long: Cytochrome c oxidase subunit 2 (230 aa).

Topologically, residues 1 to 14 are mitochondrial intermembrane; it reads MAHPSQLGFQDAAS. The chain crosses the membrane as a helical span at residues 15–45; sequence PVMEELLHFHDHALMIVLLISTLVLYIIVAM. The Mitochondrial matrix portion of the chain corresponds to 46–59; it reads VSTKLTNKYILDSQ. Residues 60 to 87 form a helical membrane-spanning segment; the sequence is EIEIVWTVLPAVILILIALPSLRILYLM. Residues 88-230 are Mitochondrial intermembrane-facing; the sequence is DEINDPHLTI…KWSTMMLEDA (143 aa). The Cu cation site is built by H161, C196, E198, C200, H204, and M207. E198 contacts Mg(2+).

Belongs to the cytochrome c oxidase subunit 2 family. Component of the cytochrome c oxidase (complex IV, CIV), a multisubunit enzyme composed of 14 subunits. The complex is composed of a catalytic core of 3 subunits MT-CO1, MT-CO2 and MT-CO3, encoded in the mitochondrial DNA, and 11 supernumerary subunits COX4I, COX5A, COX5B, COX6A, COX6B, COX6C, COX7A, COX7B, COX7C, COX8 and NDUFA4, which are encoded in the nuclear genome. The complex exists as a monomer or a dimer and forms supercomplexes (SCs) in the inner mitochondrial membrane with NADH-ubiquinone oxidoreductase (complex I, CI) and ubiquinol-cytochrome c oxidoreductase (cytochrome b-c1 complex, complex III, CIII), resulting in different assemblies (supercomplex SCI(1)III(2)IV(1) and megacomplex MCI(2)III(2)IV(2)). Found in a complex with TMEM177, COA6, COX18, COX20, SCO1 and SCO2. Interacts with TMEM177 in a COX20-dependent manner. Interacts with COX20. Interacts with COX16. The cofactor is Cu cation.

The protein localises to the mitochondrion inner membrane. It carries out the reaction 4 Fe(II)-[cytochrome c] + O2 + 8 H(+)(in) = 4 Fe(III)-[cytochrome c] + 2 H2O + 4 H(+)(out). Its function is as follows. Component of the cytochrome c oxidase, the last enzyme in the mitochondrial electron transport chain which drives oxidative phosphorylation. The respiratory chain contains 3 multisubunit complexes succinate dehydrogenase (complex II, CII), ubiquinol-cytochrome c oxidoreductase (cytochrome b-c1 complex, complex III, CIII) and cytochrome c oxidase (complex IV, CIV), that cooperate to transfer electrons derived from NADH and succinate to molecular oxygen, creating an electrochemical gradient over the inner membrane that drives transmembrane transport and the ATP synthase. Cytochrome c oxidase is the component of the respiratory chain that catalyzes the reduction of oxygen to water. Electrons originating from reduced cytochrome c in the intermembrane space (IMS) are transferred via the dinuclear copper A center (CU(A)) of subunit 2 and heme A of subunit 1 to the active site in subunit 1, a binuclear center (BNC) formed by heme A3 and copper B (CU(B)). The BNC reduces molecular oxygen to 2 water molecules using 4 electrons from cytochrome c in the IMS and 4 protons from the mitochondrial matrix. This chain is Cytochrome c oxidase subunit 2 (mt-co2), found in Salmo salar (Atlantic salmon).